The chain runs to 234 residues: tRNA (guanine-N(1)-)-methyltransferase (234 aa).

S-adenosyl-L-methionine is bound by residues G112 and 132 to 137; that span reads IGDFIL.

The protein belongs to the RNA methyltransferase TrmD family. As to quaternary structure, homodimer.

Its subcellular location is the cytoplasm. The catalysed reaction is guanosine(37) in tRNA + S-adenosyl-L-methionine = N(1)-methylguanosine(37) in tRNA + S-adenosyl-L-homocysteine + H(+). Functionally, specifically methylates guanosine-37 in various tRNAs. This chain is tRNA (guanine-N(1)-)-methyltransferase, found in Campylobacter jejuni subsp. jejuni serotype O:6 (strain 81116 / NCTC 11828).